The following is a 404-amino-acid chain: Argininosuccinate synthase (404 aa).

Residues 12–20 (AYSGGLDTS) and A40 contribute to the ATP site. Residues Y92 and S97 each contribute to the L-citrulline site. ATP is bound at residue G122. Positions 124, 128, and 129 each coordinate L-aspartate. Residue N128 coordinates L-citrulline. 5 residues coordinate L-citrulline: R132, S181, S190, E266, and Y278.

This sequence belongs to the argininosuccinate synthase family. Type 1 subfamily. As to quaternary structure, homotetramer.

It is found in the cytoplasm. The enzyme catalyses L-citrulline + L-aspartate + ATP = 2-(N(omega)-L-arginino)succinate + AMP + diphosphate + H(+). It participates in amino-acid biosynthesis; L-arginine biosynthesis; L-arginine from L-ornithine and carbamoyl phosphate: step 2/3. The chain is Argininosuccinate synthase from Photorhabdus laumondii subsp. laumondii (strain DSM 15139 / CIP 105565 / TT01) (Photorhabdus luminescens subsp. laumondii).